The sequence spans 297 residues: Urease accessory protein UreD (297 aa).

The protein belongs to the UreD family. UreD, UreF and UreG form a complex that acts as a GTP-hydrolysis-dependent molecular chaperone, activating the urease apoprotein by helping to assemble the nickel containing metallocenter of UreC. The UreE protein probably delivers the nickel.

The protein resides in the cytoplasm. Its function is as follows. Required for maturation of urease via the functional incorporation of the urease nickel metallocenter. The chain is Urease accessory protein UreD from Prochlorococcus marinus subsp. pastoris (strain CCMP1986 / NIES-2087 / MED4).